A 351-amino-acid chain; its full sequence is Mediator of RNA polymerase II transcription subunit 4 (351 aa).

Positions 30–68 (QKLAEELLAAEAELSKSLKLLETHQNNNARLQQLRQETS) form a coiled coil. Disordered stretches follow at residues 156 to 217 (TQTQ…PAHL) and 256 to 351 (PRGY…DEDD). Residues 163-177 (NSFNLSFNGTVSTPI) are compositionally biased toward polar residues. Residues 182 to 198 (PTPTTTNDTQPSTQLPP) show a composition bias toward low complexity. The segment covering 257-308 (RGYDPAEQERRRVAEEKARREAEERARLEREEAERKGREERERMAREREAAR) has biased composition (basic and acidic residues). A coiled-coil region spans residues 262–311 (AEQERRRVAEEKARREAEERARLEREEAERKGREERERMAREREAARLRN). The span at 340–351 (ADDDEDDEDEDD) shows a compositional bias: acidic residues.

The protein belongs to the Mediator complex subunit 4 family. As to quaternary structure, component of the Mediator complex.

It localises to the nucleus. Its function is as follows. Component of the Mediator complex, a coactivator involved in the regulated transcription of nearly all RNA polymerase II-dependent genes. Mediator functions as a bridge to convey information from gene-specific regulatory proteins to the basal RNA polymerase II transcription machinery. Mediator is recruited to promoters by direct interactions with regulatory proteins and serves as a scaffold for the assembly of a functional preinitiation complex with RNA polymerase II and the general transcription factors. This is Mediator of RNA polymerase II transcription subunit 4 (MED4) from Chaetomium globosum (strain ATCC 6205 / CBS 148.51 / DSM 1962 / NBRC 6347 / NRRL 1970) (Soil fungus).